Reading from the N-terminus, the 100-residue chain is Urease subunit gamma (100 aa).

This sequence belongs to the urease gamma subunit family. Heterotrimer of UreA (gamma), UreB (beta) and UreC (alpha) subunits. Three heterotrimers associate to form the active enzyme.

Its subcellular location is the cytoplasm. The enzyme catalyses urea + 2 H2O + H(+) = hydrogencarbonate + 2 NH4(+). Its pathway is nitrogen metabolism; urea degradation; CO(2) and NH(3) from urea (urease route): step 1/1. This chain is Urease subunit gamma, found in Flavobacterium johnsoniae (strain ATCC 17061 / DSM 2064 / JCM 8514 / BCRC 14874 / CCUG 350202 / NBRC 14942 / NCIMB 11054 / UW101) (Cytophaga johnsonae).